The following is a 429-amino-acid chain: GDP-fucose protein O-fucosyltransferase 2 (429 aa).

Positions 1 to 21 (MATLSFVFLLLGAVSWPPASA) are cleaved as a signal peptide. 53–57 (PEGFN) is a GDP-beta-L-fucose binding site. Glutamate 54 serves as the catalytic Proton acceptor. A disulfide bridge connects residues cysteine 161 and cysteine 192. Asparagine 189, asparagine 209, and asparagine 259 each carry an N-linked (GlcNAc...) asparagine glycan. GDP-beta-L-fucose is bound by residues 292–294 (HLR), aspartate 371, and 388–389 (TF). Cysteine 412 and cysteine 419 form a disulfide bridge.

Belongs to the glycosyltransferase 68 family.

It is found in the endoplasmic reticulum. The protein localises to the golgi apparatus. It carries out the reaction L-seryl-[protein] + GDP-beta-L-fucose = 3-O-(alpha-L-fucosyl)-L-seryl-[protein] + GDP + H(+). It catalyses the reaction L-threonyl-[protein] + GDP-beta-L-fucose = 3-O-(alpha-L-fucosyl)-L-threonyl-[protein] + GDP + H(+). It functions in the pathway protein modification; protein glycosylation. Its function is as follows. Catalyzes the reaction that attaches fucose through an O-glycosidic linkage to a conserved serine or threonine residue in the consensus sequence C1-X-X-S/T-C2 of thrombospondin type I repeats (TSRs) where C1 and C2 are the first and second cysteines of the repeat, respectively. O-fucosylates members of several protein families including the ADAMTS, the thrombospondin (TSP) and spondin families. Required for the proper secretion of ADAMTS family members such as ADAMTSL1 and ADAMTS13. The O-fucosylation of TSRs is also required for restricting epithelial to mesenchymal transition (EMT), maintaining the correct patterning of mesoderm and localization of the definite endoderm. The protein is GDP-fucose protein O-fucosyltransferase 2 (POFUT2) of Pan troglodytes (Chimpanzee).